The primary structure comprises 281 residues: MELILISGLSGSGKSVALNLLEDSGYYCVDNLPVVMLTVLIGMLKEEHVHKVAVAIDARSGHGIDLLPGKLDKLKRSGINLTFLFLFSHEETLLKRYSESRRRHPLATKGQTLEEAIRAERALLDPISDLGHRIDTSGMKANALREWVRQFIEAEPGQGLTLMFESFGFKYGIPLDADLVFDVRCLPNPHYDPELRPFNGKDKPIIDFLEGEDEVCRMRDDIARFVDTWLPCYIRDNRNYLTVAIGCTGGQHRSVYIAEWLAGEFANRARVLVRHRTLAGT.

An ATP-binding site is contributed by 8-15 (GLSGSGKS). 57 to 60 (DARS) provides a ligand contact to GTP.

Belongs to the RapZ-like family.

Functionally, displays ATPase and GTPase activities. The chain is Nucleotide-binding protein Daro_0070 from Dechloromonas aromatica (strain RCB).